The sequence spans 421 residues: TITAN-like protein (421 aa).

The C2H2-type 1; degenerate zinc-finger motif lies at 11 to 32; the sequence is EFCTVCRFHHDQGSRHKYFPRH. Residues 70-100 form a C2H2-type 2; degenerate zinc finger; the sequence is VWCVFCDEDIVELGSSFACSKAINHFASSDH. The segment at 279–306 is disordered; that stretch reads ISSSHSTDAGGNVHSGAPPPWLDANDGD. Short sequence motifs (nuclear localization signal) lie at residues 328-335 and 377-384; these read NRKLNPNR and TRKESRKE. The disordered stretch occupies residues 376–421; the sequence is GTRKESRKEFEKEKRKLVKTESISTESEPVKIQPYISKRARRESGE. The segment covering 377–389 has biased composition (basic and acidic residues); that stretch reads TRKESRKEFEKEK.

In terms of tissue distribution, also present in cotyledons, hypocotyls, stems, veins of sepals and stigmas, and actively dividing tissues such as shoot apical meristem, root tips and emerging true leaves. Weak expression in petals and anthers, and not detected in mature leaves. In seeds, expressed in both the endosperm and embryo.

The protein localises to the nucleus. Key regulator for endosperm and embryo nuclear divisions. The protein is TITAN-like protein of Arabidopsis thaliana (Mouse-ear cress).